The following is a 155-amino-acid chain: Large ribosomal subunit protein uL15 (155 aa).

Over residues 1–13 (MKLNELRDAEGAT) the composition is skewed to basic and acidic residues. Residues 1-41 (MKLNELRDAEGATKARKRVGRGIGSGSGKTGGRGVKGQKSR) form a disordered region. Gly residues predominate over residues 21 to 35 (RGIGSGSGKTGGRGV).

This sequence belongs to the universal ribosomal protein uL15 family. Part of the 50S ribosomal subunit.

Binds to the 23S rRNA. This Chelativorans sp. (strain BNC1) protein is Large ribosomal subunit protein uL15.